A 72-amino-acid chain; its full sequence is DNA gyrase inhibitor YacG (72 aa).

Zn(2+) contacts are provided by Cys-17, Cys-20, Cys-32, and Cys-36. A disordered region spans residues 52–72 (PGPEEDEMSYPPHSNDGNRSR).

It belongs to the DNA gyrase inhibitor YacG family. Interacts with GyrB. Requires Zn(2+) as cofactor.

Inhibits all the catalytic activities of DNA gyrase by preventing its interaction with DNA. Acts by binding directly to the C-terminal domain of GyrB, which probably disrupts DNA binding by the gyrase. The chain is DNA gyrase inhibitor YacG from Methylorubrum extorquens (strain CM4 / NCIMB 13688) (Methylobacterium extorquens).